Here is a 138-residue protein sequence, read N- to C-terminus: Large ribosomal subunit protein uL16 (138 aa).

The protein belongs to the universal ribosomal protein uL16 family. As to quaternary structure, part of the 50S ribosomal subunit.

Its function is as follows. Binds 23S rRNA and is also seen to make contacts with the A and possibly P site tRNAs. The polypeptide is Large ribosomal subunit protein uL16 (Acidiphilium cryptum (strain JF-5)).